The following is a 368-amino-acid chain: Transcription factor TGA1 (368 aa).

Over residues 53–65 (LDNNVSEDTSHGT) the composition is skewed to polar residues. The interval 53–83 (LDNNVSEDTSHGTAGTPHMFDQEASTSRHPD) is disordered. A bZIP domain is found at 82–145 (PDKIQRRLAQ…NGIDTNSLGF (64 aa)). Coiled coils occupy residues 83–131 (DKIQ…RQQG) and 261–281 (NLKQ…EKLQ). Residues 84-104 (KIQRRLAQNREAARKSRLRKK) form a basic motif region. A leucine-zipper region spans residues 110-124 (LETSRLKLIQLEQEL). The DOG1 domain occupies 153-363 (IAAFEMEYGH…RALSSSWATR (211 aa)). A disulfide bond links Cys-260 and Cys-266.

This sequence belongs to the bZIP family. Binds DNA as a dimer. The reduced form interacts with NPR1. Predominantly expressed in roots.

The protein localises to the nucleus. Functionally, transcriptional activator that binds specifically to the DNA sequence 5'-TGACG-3'. Recognizes ocs elements like the as-1 motif of the cauliflower mosaic virus 35S promoter. Binding to the as-1-like cis elements mediate auxin- and salicylic acid-inducible transcription. May be involved in the induction of the systemic acquired resistance (SAR) via its interaction with NPR1. Could also bind to the Hex-motif (5'-TGACGTGG-3') another cis-acting element found in plant histone promoters. This is Transcription factor TGA1 (TGA1) from Arabidopsis thaliana (Mouse-ear cress).